Here is a 632-residue protein sequence, read N- to C-terminus: Galactan 5-O-arabinofuranosyltransferase (632 aa).

The next 13 membrane-spanning stretches (helical) occupy residues 10–30 (QIVL…IAIA), 45–65 (ALTT…GGVW), 76–96 (LGGL…PLGA), 162–182 (WAIT…WQMI), 184–204 (FEYA…YSSP), 206–226 (PYAA…WSGL), 242–259 (GWAT…AATW), 263–282 (LLAY…ATAL), 298–318 (LAGI…PFLA), 344–364 (FPML…LWLI), 375–395 (ALMI…LTTL), 409–429 (LTVL…QSLA), and 434–454 (AVLS…SQDI). At 455–632 (PNVLRPDLTI…LAIRKPMGNA (178 aa)) the chain is on the extracellular side.

The protein belongs to the glycosyltransferase 85 family.

It is found in the cell membrane. It carries out the reaction Adds an alpha-D-arabinofuranosyl group from trans,octacis-decaprenylphospho-beta-D-arabinofuranose at the 5-O-position of the eighth, tenth and twelfth galactofuranose unit of the galactofuranan chain of [beta-D-galactofuranosyl-(1-&gt;5)-beta-D-galactofuranosyl-(1-&gt;6)]14-beta-D-galactofuranosyl-(1-&gt;5)-beta-D-galactofuranosyl-(1-&gt;4)-alpha-L-rhamnopyranosyl-(1-&gt;3)-N-acetyl-alpha-D-glucosaminyl-diphospho-trans,octacis-decaprenol.. The protein operates within cell wall biogenesis; cell wall polysaccharide biosynthesis. In terms of biological role, involved in the biosynthesis of the arabinogalactan (AG) region of the mycolylarabinogalactan-peptidoglycan (mAGP) complex, an essential component of the mycobacterial cell wall. Catalyzes the addition of the first key arabinofuranosyl (Araf) residue from the sugar donor decaprenyl-phospho-arabinose (DPA) on the C-5 of a 6-linked galactofuranosyl (Galf) of the galactan domain, thus 'priming' the galactan for further elaboration by other arabinofuranosyltransferases. In Mycobacterium leprae (strain TN), this protein is Galactan 5-O-arabinofuranosyltransferase.